The chain runs to 377 residues: Testis-expressed protein 13A (377 aa).

The segment at 92–377 is required for repression of transcription; the sequence is WLQDLSSLHK…CGKGIWLQNP (286 aa). Residues 122–156 adopt a coiled-coil conformation; it reads QKEVALQLQMAQAKLEEVQRERDLLRLKILQAELR. The LRR repeat unit spans residues 142-165; the sequence is ERDLLRLKILQAELRALPNAVRPA. The RanBP2-type zinc-finger motif lies at 345–369; that stretch reads RPGDWDCPWCKAVNFSRRENCFHCG. Cys-351, Cys-354, Cys-365, and Cys-368 together coordinate Zn(2+).

Belongs to the TEX13 family. As to quaternary structure, interacts with CNOT1; the interaction may inhibit CNOT1 binding to mRNA and subsequently CNOT1-mediated mRNA degradation.

In terms of biological role, binds to ssRNA containing the consensus sequence 5'-AGGUAA-3'. Plays a role in transcriptional repression. Required for rapid sperm motility and timely degradation of mRNA via its interaction with CNOT1. This is Testis-expressed protein 13A from Mus musculus (Mouse).